The following is a 119-amino-acid chain: Ribonuclease P protein component (119 aa).

Belongs to the RnpA family. In terms of assembly, consists of a catalytic RNA component (M1 or rnpB) and a protein subunit.

The enzyme catalyses Endonucleolytic cleavage of RNA, removing 5'-extranucleotides from tRNA precursor.. Its function is as follows. RNaseP catalyzes the removal of the 5'-leader sequence from pre-tRNA to produce the mature 5'-terminus. It can also cleave other RNA substrates such as 4.5S RNA. The protein component plays an auxiliary but essential role in vivo by binding to the 5'-leader sequence and broadening the substrate specificity of the ribozyme. In Listeria innocua serovar 6a (strain ATCC BAA-680 / CLIP 11262), this protein is Ribonuclease P protein component.